Here is a 357-residue protein sequence, read N- to C-terminus: Low-salt glycan biosynthesis nucleotidyltransferase Agl11 (357 aa).

Asp108 and Asp221 together coordinate Mg(2+).

It belongs to the glucose-1-phosphate thymidylyltransferase family. Requires Mg(2+) as cofactor.

Its pathway is protein modification; protein glycosylation. It participates in cell surface structure biogenesis; S-layer biogenesis. Its function is as follows. Nucleotidyltransferase involved in N-glycan biosynthetic pathway that takes place under low-salt conditions (1.75 M instead of 3.4 M). Participates in the formation of the tetrasaccharide present at 'Asn-532' of S-layer glycoprotein Csg, consisting of a sulfated hexose, 2 hexoses and rhamnose. Involved in the addition of final rhamnose (sugar 4) of the tetrasaccharide on the dolichol phosphate carrier. This Haloferax volcanii (strain ATCC 29605 / DSM 3757 / JCM 8879 / NBRC 14742 / NCIMB 2012 / VKM B-1768 / DS2) (Halobacterium volcanii) protein is Low-salt glycan biosynthesis nucleotidyltransferase Agl11 (agl11).